A 206-amino-acid polypeptide reads, in one-letter code: Thymidylate kinase (206 aa).

11–18 (GIDGAGKT) lines the ATP pocket.

This sequence belongs to the thymidylate kinase family.

The enzyme catalyses dTMP + ATP = dTDP + ADP. Phosphorylation of dTMP to form dTDP in both de novo and salvage pathways of dTTP synthesis. The chain is Thymidylate kinase from Burkholderia vietnamiensis (strain G4 / LMG 22486) (Burkholderia cepacia (strain R1808)).